A 174-amino-acid chain; its full sequence is Chaperonin-like RBCX protein 1, chloroplastic (174 aa).

The N-terminal 45 residues, 1 to 45, are a transit peptide targeting the chloroplast; the sequence is MESSSSLLHHSYLSYLNPKFGKRPLVSYPLMQSSRKCKQTRICSN.

Belongs to the RbcX family. Homodimer. Interacts with rbcL, atpB and THI1.

It localises to the plastid. It is found in the chloroplast. In terms of biological role, chaperone involved in RuBisCO assembly process. This is Chaperonin-like RBCX protein 1, chloroplastic from Arabidopsis thaliana (Mouse-ear cress).